Here is an 86-residue protein sequence, read N- to C-terminus: Toxin Aam3 (86 aa).

Positions 1-19 (MNYLVMISLALLFMIGVES) are cleaved as a signal peptide. Residues 21–85 (RDGYIAQPNN…PIKIIGQKCT (65 aa)) enclose the LCN-type CS-alpha/beta domain. Disulfide bonds link Cys-31–Cys-84, Cys-35–Cys-56, Cys-42–Cys-66, and Cys-46–Cys-68.

Belongs to the long (4 C-C) scorpion toxin superfamily. Sodium channel inhibitor family. Alpha subfamily. Post-translationally, the C-terminal basic residue is removed by a carboxypeptidase. In terms of tissue distribution, expressed by the venom gland.

The protein resides in the secreted. Functionally, alpha toxins bind voltage-independently at site-3 of sodium channels (Nav) and inhibit the inactivation of the activated channels, thereby blocking neuronal transmission. This is Toxin Aam3 from Androctonus amoreuxi (African fattail scorpion).